The chain runs to 458 residues: UDP-N-acetylmuramate--L-alanine ligase (458 aa).

115 to 121 contacts ATP; sequence GSHGKTT.

This sequence belongs to the MurCDEF family.

Its subcellular location is the cytoplasm. The catalysed reaction is UDP-N-acetyl-alpha-D-muramate + L-alanine + ATP = UDP-N-acetyl-alpha-D-muramoyl-L-alanine + ADP + phosphate + H(+). It functions in the pathway cell wall biogenesis; peptidoglycan biosynthesis. Its function is as follows. Cell wall formation. The protein is UDP-N-acetylmuramate--L-alanine ligase of Anaeromyxobacter dehalogenans (strain 2CP-C).